Reading from the N-terminus, the 437-residue chain is Enolase (437 aa).

Gln-162 contacts (2R)-2-phosphoglycerate. Glu-204 serves as the catalytic Proton donor. Mg(2+)-binding residues include Asp-251, Glu-297, and Asp-324. (2R)-2-phosphoglycerate contacts are provided by Lys-349, Arg-378, Ser-379, and Lys-400. Lys-349 acts as the Proton acceptor in catalysis.

The protein belongs to the enolase family. The cofactor is Mg(2+).

The protein localises to the cytoplasm. It localises to the secreted. The protein resides in the cell surface. It catalyses the reaction (2R)-2-phosphoglycerate = phosphoenolpyruvate + H2O. It functions in the pathway carbohydrate degradation; glycolysis; pyruvate from D-glyceraldehyde 3-phosphate: step 4/5. Its function is as follows. Catalyzes the reversible conversion of 2-phosphoglycerate (2-PG) into phosphoenolpyruvate (PEP). It is essential for the degradation of carbohydrates via glycolysis. The sequence is that of Enolase from Chlorobaculum parvum (strain DSM 263 / NCIMB 8327) (Chlorobium vibrioforme subsp. thiosulfatophilum).